The chain runs to 331 residues: CMRF35-like molecule 9 (331 aa).

An N-terminal signal peptide occupies residues 1–18 (MRPLVLLWGCLVLPGYEA). Positions 19 to 120 (LKGPKEISGF…LGRDESFEVT (102 aa)) constitute an Ig-like V-type domain. At 19 to 204 (LKGPKEISGF…KPSVSIPMVR (186 aa)) the chain is on the extracellular side. A disulfide bridge connects residues Cys-37 and Cys-106. Thr-136 carries O-linked (GalNAc...) threonine glycosylation. Ser-140 carries an O-linked (GalNAc...) serine glycan. Thr-143 carries O-linked (GalNAc...) threonine glycosylation. O-linked (GalNAc...) serine glycosylation occurs at Ser-145. Thr-150 and Thr-152 each carry an O-linked (GalNAc...) threonine glycan. A glycan (O-linked (GalNAc...) serine) is linked at Ser-154. Residues Thr-164, Thr-181, and Thr-182 are each glycosylated (O-linked (GalNAc...) threonine). O-linked (GalNAc...) serine glycosylation occurs at Ser-186. Residues 205–225 (MMAPVLILLSLLLAAGLIAFG) traverse the membrane as a helical segment. At 226–331 (SHMLRWRKKA…ELAFSEFISV (106 aa)) the chain is on the cytoplasmic side. The span at 278–293 (NPSAVPSPETQNLSQS) shows a compositional bias: polar residues. Residues 278–318 (NPSAVPSPETQNLSQSTEEEEAARSLDDDKEDVMAPPPLQM) are disordered.

The protein belongs to the CD300 family. In terms of processing, O-glycosylated with sialylated oligosaccharides. Expressed in monocyte cell lines. Expressed in certain types of endothelial and myeloid lineage cells. Expressed in mesenteric lymph nodes (LNs), spleen, thymus, lung, heart and kidney. Expressed in high endothelial venules (HEVs) in peripheral and mesenteric LNs (at protein level). Highly expressed in heart. Slightly expressed in spleen and thymus. Isoform 5 is expressed preferentially in heart. Isoform 1 is expressed predominantly in kidney and liver.

It localises to the apical cell membrane. The protein resides in the basolateral cell membrane. The protein localises to the endosome. Its subcellular location is the multivesicular body membrane. Functionally, receptor which may mediate L-selectin-dependent lymphocyte rollings. Binds SELL in a calcium dependent manner. Binds lymphocyte. This Mus musculus (Mouse) protein is CMRF35-like molecule 9 (Cd300lg).